A 399-amino-acid chain; its full sequence is Octopine dehydrogenase (399 aa).

Residues 10–13 and 35–38 contribute to the NADH site; these read GGNG and FADE. Positions 118 and 143 each coordinate pyruvate. Gln118 provides a ligand contact to substrate. Residue Cys148 participates in NAD(+) binding. Met206 is a binding site for L-arginine. His212 serves as a coordination point for pyruvate. The active site involves His212. Residue Arg324 coordinates NAD(+).

This sequence belongs to the lysopine/nopaline/octopine/opine/vitopine dehydrogenases family.

The catalysed reaction is D-octopine + NAD(+) + H2O = L-arginine + pyruvate + NADH + H(+). Its activity is regulated as follows. Agmatine acts as a competitive inhibitor of the condensation reaction where the L-arginine and agmatine substrates compete for the same site. Its function is as follows. Catalyzes the reverse reaction of octopine dehydrogenation. Acts on L-arginine in preference to other substrates such as canavanine, cysteine, L-alanine, ornithine or norvaline, owing to the presence of the positively charged guanidium group. The protein is Octopine dehydrogenase of Pecten maximus (King scallop).